We begin with the raw amino-acid sequence, 386 residues long: MNPQIRNPMERMYRDTFYDNFENEPILYGRSYTWLCYEVKIKRGRSNLLWDTGVFRGPVLPKRQSNHRQEVYFRFENHAEMCFLSWFCGNRLPANRRFQITWFVSWNPCLPCVVKVTKFLAEHPNVTLTISAARLYYYRDRDWRWVLLRLHKAGARVKIMDYEDFAYCWENFVCNEGQPFMPWYKFDDNYASLHRTLKEILRNPMEAMYPHIFYFHFKNLLKACGRNESWLCFTMEVTKHHSAVFRKRGVFRNQVDPETHCHAERCFLSWFCDDILSPNTNYEVTWYTSWSPCPECAGEVAEFLARHSNVNLTIFTARLCYFWDTDYQEGLCSLSQEGASVKIMGYKDFVSCWKNFVYSDDEPFKPWKGLQTNFRLLKRRLREILQ.

CMP/dCMP-type deaminase domains follow at residues 29 to 145 (GRSY…DWRW) and 187 to 334 (DDNY…LCSL). Zn(2+) contacts are provided by His-78, Cys-109, Cys-112, and His-262. Glu-264 serves as the catalytic Proton donor. Positions 293 and 296 each coordinate Zn(2+).

This sequence belongs to the cytidine and deoxycytidylate deaminase family. As to quaternary structure, can form homo- and heterodimers with APOBEC3F and APOBEC3G. Interacts with L1RE1; this interaction inhibits LINE-1 retrotransposition. In terms of assembly, (Microbial infection) Interacts with HIV-1 Vif. This interaction triggers APOBEC3D polyubiquitylation and degradation by the 26S proteasome. It depends on Zn(2+) as a cofactor. As to expression, expressed in lymphoid organs. Also detected in non-lymphoid tissues including lung.

It is found in the cytoplasm. The protein localises to the P-body. It catalyses the reaction a 2'-deoxycytidine in single-stranded DNA + H2O + H(+) = a 2'-deoxyuridine in single-stranded DNA + NH4(+). With respect to regulation, (Microbial infection) Antiviral activity is neutralized by the HIV-1 virion infectivity factor (Vif), that prevents its incorporation into progeny virions by both inhibiting its translation and/or by inducing its ubiquitination and subsequent degradation by the 26S proteasome. In terms of biological role, DNA deaminase (cytidine deaminase) which acts as an inhibitor of retrovirus replication and retrotransposon mobility via deaminase-dependent and -independent mechanisms. Exhibits antiviral activity against HIV-1. After the penetration of retroviral nucleocapsids into target cells of infection and the initiation of reverse transcription, it can induce the conversion of cytosine to uracil in the minus-sense single-strand viral DNA, leading to G-to-A hypermutations in the subsequent plus-strand viral DNA. The resultant detrimental levels of mutations in the proviral genome, along with a deamination-independent mechanism that works prior to the proviral integration, together exert efficient antiretroviral effects in infected target cells. Selectively targets single-stranded DNA and does not deaminate double-stranded DNA or single- or double-stranded RNA. Also inhibits the mobility of LTR and non-LTR retrotransposons. Functionally, (Microbial infection) Enhances hepatitis B virus/HBV replication by excluding restriction factors APOBEC3F and APOBEC3G from HBV capsids. The protein is DNA dC-&gt;dU-editing enzyme APOBEC-3D of Homo sapiens (Human).